The chain runs to 176 residues: ATP-dependent protease subunit HslV (176 aa).

Threonine 2 is an active-site residue. Glycine 157, cysteine 160, and threonine 163 together coordinate Na(+).

The protein belongs to the peptidase T1B family. HslV subfamily. As to quaternary structure, a double ring-shaped homohexamer of HslV is capped on each side by a ring-shaped HslU homohexamer. The assembly of the HslU/HslV complex is dependent on binding of ATP.

Its subcellular location is the cytoplasm. It carries out the reaction ATP-dependent cleavage of peptide bonds with broad specificity.. Allosterically activated by HslU binding. Its function is as follows. Protease subunit of a proteasome-like degradation complex believed to be a general protein degrading machinery. This Pectobacterium carotovorum subsp. carotovorum (strain PC1) protein is ATP-dependent protease subunit HslV.